The sequence spans 318 residues: Transaldolase (318 aa).

Lysine 132 (schiff-base intermediate with substrate) is an active-site residue.

Belongs to the transaldolase family. Type 1 subfamily. Homodimer.

The protein localises to the cytoplasm. The enzyme catalyses D-sedoheptulose 7-phosphate + D-glyceraldehyde 3-phosphate = D-erythrose 4-phosphate + beta-D-fructose 6-phosphate. It participates in carbohydrate degradation; pentose phosphate pathway; D-glyceraldehyde 3-phosphate and beta-D-fructose 6-phosphate from D-ribose 5-phosphate and D-xylulose 5-phosphate (non-oxidative stage): step 2/3. In terms of biological role, transaldolase is important for the balance of metabolites in the pentose-phosphate pathway. This is Transaldolase from Shewanella woodyi (strain ATCC 51908 / MS32).